The primary structure comprises 383 residues: GTPase-interacting component 2 (383 aa).

The disordered stretch occupies residues 63 to 106 (SNKKNIELPPLSPNSHPSCHHRRSNSNSAKSKESSSSSSSANKT). Residues 87–105 (NSNSAKSKESSSSSSSANK) are compositionally biased toward low complexity. In terms of domain architecture, CRIB spans 134-147 (ISTPFDFQHISHAD). A compositionally biased stretch (polar residues) spans 155–165 (EQLQEPSSLST). Positions 155–189 (EQLQEPSSLSTEIKDDYTSSSSKRDSKSLNKAFVT) are disordered. The span at 166 to 182 (EIKDDYTSSSSKRDSKS) shows a compositional bias: basic and acidic residues. A phosphoserine mark is found at serine 254, serine 258, serine 337, serine 345, and serine 367. Positions 319 to 361 (ETPNSNKDSAKAFFPSRQSPLPKRRNSIATPSPQSKFSYSDSP) are disordered. A compositionally biased stretch (polar residues) spans 345–361 (SIATPSPQSKFSYSDSP).

Belongs to the BORG/CEP family. In terms of assembly, interacts with GTP-bound CDC42.

The protein resides in the bud neck. Its subcellular location is the bud tip. The protein localises to the cytoplasm. It localises to the cell cortex. It is found in the cytoskeleton. Required for cell size and shape control, bud site selection, bud emergence, actin cytoskeletal organization, mitotic spindle orientation/positioning, and mating projection formation in response to mating pheromone. The protein is GTPase-interacting component 2 (GIC2) of Saccharomyces cerevisiae (strain ATCC 204508 / S288c) (Baker's yeast).